The primary structure comprises 305 residues: UPF0282 protein Tneu_0934 (305 aa).

This sequence belongs to the UPF0282 family.

In Pyrobaculum neutrophilum (strain DSM 2338 / JCM 9278 / NBRC 100436 / V24Sta) (Thermoproteus neutrophilus), this protein is UPF0282 protein Tneu_0934.